The sequence spans 274 residues: Diaminopimelate epimerase (274 aa).

The substrate site is built by Asn-11, Gln-44, and Asn-64. Cys-73 serves as the catalytic Proton donor. Residues 74 to 75 (GN), Asn-157, Asn-190, and 208 to 209 (ER) each bind substrate. Cys-217 functions as the Proton acceptor in the catalytic mechanism. 218–219 (GS) is a substrate binding site.

This sequence belongs to the diaminopimelate epimerase family. In terms of assembly, homodimer.

It localises to the cytoplasm. The catalysed reaction is (2S,6S)-2,6-diaminopimelate = meso-2,6-diaminopimelate. It functions in the pathway amino-acid biosynthesis; L-lysine biosynthesis via DAP pathway; DL-2,6-diaminopimelate from LL-2,6-diaminopimelate: step 1/1. Its function is as follows. Catalyzes the stereoinversion of LL-2,6-diaminopimelate (L,L-DAP) to meso-diaminopimelate (meso-DAP), a precursor of L-lysine and an essential component of the bacterial peptidoglycan. The chain is Diaminopimelate epimerase from Escherichia coli O81 (strain ED1a).